A 130-amino-acid chain; its full sequence is Fluoride-specific ion channel FluC (130 aa).

Transmembrane regions (helical) follow at residues 2–22 (GLLL…RFAL), 36–56 (GILL…AFLI), 71–91 (FLLV…SLDI), and 100–120 (IFIA…AVIL). Na(+)-binding residues include glycine 79 and threonine 82.

This sequence belongs to the fluoride channel Fluc/FEX (TC 1.A.43) family.

The protein localises to the cell inner membrane. The catalysed reaction is fluoride(in) = fluoride(out). With respect to regulation, na(+) is not transported, but it plays an essential structural role and its presence is essential for fluoride channel function. Functionally, fluoride-specific ion channel. Important for reducing fluoride concentration in the cell, thus reducing its toxicity. This is Fluoride-specific ion channel FluC from Francisella tularensis subsp. mediasiatica (strain FSC147).